A 70-amino-acid chain; its full sequence is Prokaryotic ubiquitin-like protein UBact (70 aa).

Basic and acidic residues-rich tracts occupy residues methionine 1–glycine 15 and threonine 24–glycine 50. Positions methionine 1–glutamate 70 are disordered. Residue glutamate 70 forms an Isoglutamyl lysine isopeptide (Glu-Lys) (interchain with K-? in acceptor proteins) linkage.

The protein belongs to the ubiquitin-like protein UBact family.

Its function is as follows. May function as a protein modifier covalently attached to lysine residues of substrate proteins. This may serve to target the modified proteins for degradation by proteasomes. The chain is Prokaryotic ubiquitin-like protein UBact from Terrybacteria sp. (strain RIFCSPHIGHO2_01_FULL_58_15).